The following is an 80-amino-acid chain: Cell division protein ZapB (80 aa).

Residues 3–80 (FEVLEQLESK…ALLGKMDEVE (78 aa)) are a coiled coil. Residues 41 to 53 (ANELRSQREELEQ) show a composition bias toward basic and acidic residues. The interval 41–60 (ANELRSQREELEQKSQQAQQ) is disordered.

This sequence belongs to the ZapB family. Homodimer. The ends of the coiled-coil dimer bind to each other, forming polymers. Interacts with FtsZ.

Its subcellular location is the cytoplasm. In terms of biological role, non-essential, abundant cell division factor that is required for proper Z-ring formation. It is recruited early to the divisome by direct interaction with FtsZ, stimulating Z-ring assembly and thereby promoting cell division earlier in the cell cycle. Its recruitment to the Z-ring requires functional FtsA or ZipA. This Vibrio campbellii (strain ATCC BAA-1116) protein is Cell division protein ZapB.